Reading from the N-terminus, the 143-residue chain is 5-hydroxymethyl-dUMP N-hydrolase (143 aa).

5-hydroxymethyl-dUMP is bound by residues Gly7, Ile9, Arg10, Gly11, Ser77, Gly79, Glu83, and Ser107.

Belongs to the 2'-deoxynucleoside 5'-phosphate N-hydrolase 1 family. In terms of assembly, monomer and homodimer.

The protein localises to the cytoplasm. It is found in the nucleus. It catalyses the reaction 5-hydroxymethyl-dUMP + H2O = 5-hydroxymethyluracil + 2-deoxy-D-ribose 5-phosphate. Functionally, part of a nucleotide salvage pathway that eliminates epigenetically modified 5-hydroxymethyl-dCMP (hmdCMP) in a two-step process entailing deamination to cytotoxic 5-hydroxymethyl-dUMP (hmdUMP), followed by its hydrolysis into 5-hydroxymethyluracil (hmU) and 2-deoxy-D-ribose 5-phosphate (deoxyribosephosphate). The polypeptide is 5-hydroxymethyl-dUMP N-hydrolase (dnph1) (Danio rerio (Zebrafish)).